The following is a 218-amino-acid chain: Small ribosomal subunit protein uS3 (218 aa).

One can recognise a KH type-2 domain in the interval 38–106 (IREYLTKRLS…RVHINIVEIK (69 aa)).

The protein belongs to the universal ribosomal protein uS3 family. Part of the 30S ribosomal subunit. Forms a tight complex with proteins S10 and S14.

In terms of biological role, binds the lower part of the 30S subunit head. Binds mRNA in the 70S ribosome, positioning it for translation. This chain is Small ribosomal subunit protein uS3, found in Anoxybacillus flavithermus (strain DSM 21510 / WK1).